A 72-amino-acid chain; its full sequence is Translation initiation factor IF-1 1 (72 aa).

An S1-like domain is found at 1–72 (MSKDDVIQMA…TRARIIFRAK (72 aa)).

The protein belongs to the IF-1 family. In terms of assembly, component of the 30S ribosomal translation pre-initiation complex which assembles on the 30S ribosome in the order IF-2 and IF-3, IF-1 and N-formylmethionyl-tRNA(fMet); mRNA recruitment can occur at any time during PIC assembly.

Its subcellular location is the cytoplasm. One of the essential components for the initiation of protein synthesis. Stabilizes the binding of IF-2 and IF-3 on the 30S subunit to which N-formylmethionyl-tRNA(fMet) subsequently binds. Helps modulate mRNA selection, yielding the 30S pre-initiation complex (PIC). Upon addition of the 50S ribosomal subunit IF-1, IF-2 and IF-3 are released leaving the mature 70S translation initiation complex. This is Translation initiation factor IF-1 1 from Polynucleobacter asymbioticus (strain DSM 18221 / CIP 109841 / QLW-P1DMWA-1) (Polynucleobacter necessarius subsp. asymbioticus).